The primary structure comprises 383 residues: Anhydro-N-acetylmuramic acid kinase (383 aa).

9-16 (GTSVDSID) contacts ATP.

It belongs to the anhydro-N-acetylmuramic acid kinase family.

The catalysed reaction is 1,6-anhydro-N-acetyl-beta-muramate + ATP + H2O = N-acetyl-D-muramate 6-phosphate + ADP + H(+). It participates in amino-sugar metabolism; 1,6-anhydro-N-acetylmuramate degradation. It functions in the pathway cell wall biogenesis; peptidoglycan recycling. Its function is as follows. Catalyzes the specific phosphorylation of 1,6-anhydro-N-acetylmuramic acid (anhMurNAc) with the simultaneous cleavage of the 1,6-anhydro ring, generating MurNAc-6-P. Is required for the utilization of anhMurNAc either imported from the medium or derived from its own cell wall murein, and thus plays a role in cell wall recycling. The protein is Anhydro-N-acetylmuramic acid kinase of Crocosphaera subtropica (strain ATCC 51142 / BH68) (Cyanothece sp. (strain ATCC 51142)).